The sequence spans 105 residues: Replication initiation control protein YabA (105 aa).

Zn(2+) contacts are provided by H79, C81, C95, and C98.

This sequence belongs to the YabA family. In terms of assembly, homotetramer. Interacts with both DnaA and DnaN, acting as a bridge between these two proteins. The cofactor is Zn(2+).

The protein resides in the cytoplasm. The protein localises to the nucleoid. Involved in control of chromosome replication initiation. Inhibits the cooperative binding of DnaA to the oriC region, thus negatively regulating initiation of chromosome replication. Inhibits the ability of DnaA-ATP to form a helix on DNA; does not disassemble preformed DnaA-DNA helices. Decreases the residence time of DnaA on the chromosome at its binding sites (oriC, replication forks and promoter-binding sites). Tethers DnaA to the replication machinery via the DNA polymerase beta sliding clamp subunit (dnaN). Associates with oriC and other DnaA targets on the chromosome in a DnaA-dependent manner. The chain is Replication initiation control protein YabA from Streptococcus pneumoniae serotype 2 (strain D39 / NCTC 7466).